A 186-amino-acid polypeptide reads, in one-letter code: Ribosome-recycling factor (186 aa).

The protein belongs to the RRF family.

The protein resides in the cytoplasm. In terms of biological role, responsible for the release of ribosomes from messenger RNA at the termination of protein biosynthesis. May increase the efficiency of translation by recycling ribosomes from one round of translation to another. The polypeptide is Ribosome-recycling factor (Bartonella bacilliformis (strain ATCC 35685 / KC583 / Herrer 020/F12,63)).